The chain runs to 390 residues: DNA polymerase IV (390 aa).

Residues 6-187 (VMHVDLDAFF…LDISIMPGIG (182 aa)) form the UmuC domain. Positions 10 and 105 each coordinate Mg(2+). Glu106 is an active-site residue.

Belongs to the DNA polymerase type-Y family. In terms of assembly, monomer. It depends on Mg(2+) as a cofactor.

The protein localises to the cytoplasm. It catalyses the reaction DNA(n) + a 2'-deoxyribonucleoside 5'-triphosphate = DNA(n+1) + diphosphate. In terms of biological role, poorly processive, error-prone DNA polymerase involved in untargeted mutagenesis. Copies undamaged DNA at stalled replication forks, which arise in vivo from mismatched or misaligned primer ends. These misaligned primers can be extended by PolIV. Exhibits no 3'-5' exonuclease (proofreading) activity. May be involved in translesional synthesis, in conjunction with the beta clamp from PolIII. In Dehalococcoides mccartyi (strain ATCC BAA-2266 / KCTC 15142 / 195) (Dehalococcoides ethenogenes (strain 195)), this protein is DNA polymerase IV.